The sequence spans 473 residues: H(+)/Cl(-) exchange transporter ClcA (473 aa).

Over 1–32 (MKTDTPSLEIPQAARLRRRQLIRQLLERDKTP) the chain is Cytoplasmic. A helical transmembrane segment spans residues 33–69 (LAILFMAAVVGTLVGLAAVAFDKGVSWLQNQRMGALV). Topologically, residues 70–76 (HTADNYP) are periplasmic. Residues 77 to 100 (LLLTVAFLCSAVLAMFGYFLVRKY) traverse the membrane as a helical segment. A Selectivity filter part_1 motif is present at residues 106 to 110 (GSGIP). S107 serves as a coordination point for chloride. The helical intramembrane region spans 109–116 (IPEIEGAL). The Cytoplasmic portion of the chain corresponds to 117-123 (EDQRPVR). The next 2 membrane-spanning stretches (helical) occupy residues 124 to 141 (WWRV…TLGG) and 148 to 166 (EGPT…LDIF). Positions 146 to 150 (GREGP) match the Selectivity filter part_2 motif. Topologically, residues 167–176 (RLKGDEARHT) are cytoplasmic. 2 intramembrane regions (helical) span residues 177–189 (LLAT…LAAA) and 193–201 (PLAGILFII). Residues 202-214 (EEMRPQFRYTLIS) lie on the Cytoplasmic side of the membrane. A helical transmembrane segment spans residues 215–232 (IKAVFIGVIMSTIMYRIF). The Periplasmic portion of the chain corresponds to 233–252 (NHEVALIDVGKLSDAPLNTL). The helical transmembrane segment at 253 to 281 (WLYLILGIIFGIFGPIFNKWVLGMQDLLH) threads the bilayer. At 282–287 (RVHGGN) the chain is on the cytoplasmic side. Residues 288 to 309 (ITKWVIMGGAIGGLCGLLGFVA) form a helical membrane-spanning segment. Over 310-329 (PATSGGGFNLIPIATAGNFS) the chain is Periplasmic. The next 2 membrane-spanning stretches (helical) occupy residues 330–349 (MGML…LCFS) and 355–376 (GIFA…MVAV). Residues 355–359 (GIFAP) carry the Selectivity filter part_3 motif. Chloride is bound by residues I356 and F357. The Periplasmic portion of the chain corresponds to 377–386 (ELFPQYHLEA). Residues 387 to 401 (GTFAIAGMGALLAAS) constitute an intramembrane region (helical). Positions 402 to 404 (IRA) form an intramembrane region, note=Loop between two helices. The segment at residues 405 to 416 (PLTGIILVLEMT) is an intramembrane region (helical). Residues 417-421 (DNYQL) constitute an intramembrane region (note=Loop between two helices). Residues 422 to 438 (ILPMIITGLGATLLAQF) form a helical membrane-spanning segment. The Cytoplasmic segment spans residues 439–473 (TGGKPLYSAILARTLAKQEAEQLARSKAASASENT). Y445 lines the chloride pocket.

It belongs to the chloride channel (TC 2.A.49) family. ClcA subfamily. In terms of assembly, homodimer.

It localises to the cell inner membrane. The catalysed reaction is 2 chloride(in) + H(+)(out) = 2 chloride(out) + H(+)(in). Functionally, proton-coupled chloride transporter. Functions as antiport system and exchanges two chloride ions for 1 proton. Probably acts as an electrical shunt for an outwardly-directed proton pump that is linked to amino acid decarboxylation, as part of the extreme acid resistance (XAR) response. This chain is H(+)/Cl(-) exchange transporter ClcA, found in Escherichia fergusonii (strain ATCC 35469 / DSM 13698 / CCUG 18766 / IAM 14443 / JCM 21226 / LMG 7866 / NBRC 102419 / NCTC 12128 / CDC 0568-73).